The primary structure comprises 1208 residues: Calmodulin-binding transcription activator 2 (1208 aa).

A DNA-binding region (CG-1) is located at residues 30 to 160 (RCPLLPPERL…YLNVPALEDC (131 aa)). Residues 78-86 (NRKKVKYRK) carry the Nuclear localization signal motif. Disordered regions lie at residues 269–328 (ISHS…SRGG), 366–418 (VGSE…PCPA), and 437–507 (QLGA…ELEP). Pro residues predominate over residues 275 to 288 (PEPPPLIAPLPPEL). Composition is skewed to low complexity over residues 294–305 (SPSSSSSSSSSS) and 319–328 (TSRGGSSRGG). Composition is skewed to pro residues over residues 371–380 (SAPPAPPSPA) and 464–476 (TVPP…PSSP). The IPT/TIG domain maps to 544 to 622 (DFSPEWSYPE…LSASVLFEYR (79 aa)). ANK repeat units lie at residues 717–750 (RGMS…SLDL), 762–792 (FSCT…ALSI), and 796–826 (LGRL…ELSV). Disordered regions lie at residues 826–881 (VEHP…ASDI) and 908–936 (NSKE…DSPP). The segment covering 829–853 (PLALSPPSSSPDTGLSSASSPSELS) has biased composition (low complexity). IQ domains follow at residues 1054–1083 (LYEA…AAAV) and 1107–1136 (MTQA…AAVL). Residues 1144 to 1166 (YRRRPGPPHRPSGPLPARNKGTF) form a disordered region.

Belongs to the CAMTA family. In terms of assembly, may interact with calmodulin.

The protein localises to the nucleus. In terms of biological role, transcription activator. May act as tumor suppressor. In Mus musculus (Mouse), this protein is Calmodulin-binding transcription activator 2 (Camta2).